We begin with the raw amino-acid sequence, 473 residues long: Photosystem II CP43 reaction center protein (473 aa).

The propeptide occupies 1–14 (MKTLYSLRRFYPVE). Thr15 carries the N-acetylthreonine modification. Residue Thr15 is modified to Phosphothreonine. The next 5 helical transmembrane spans lie at 69-93 (LFEV…PHLA), 134-155 (LIGP…KDRN), 178-200 (KALY…RKIT), 255-275 (KPFA…LSYS), and 291-312 (WFNN…ASQA). Glu367 lines the [CaMn4O5] cluster pocket. A helical membrane pass occupies residues 447 to 471 (RARAAAAGFEKGIDRDFEPVLSMTP).

It belongs to the PsbB/PsbC family. PsbC subfamily. PSII is composed of 1 copy each of membrane proteins PsbA, PsbB, PsbC, PsbD, PsbE, PsbF, PsbH, PsbI, PsbJ, PsbK, PsbL, PsbM, PsbT, PsbX, PsbY, PsbZ, Psb30/Ycf12, at least 3 peripheral proteins of the oxygen-evolving complex and a large number of cofactors. It forms dimeric complexes. The cofactor is Binds multiple chlorophylls and provides some of the ligands for the Ca-4Mn-5O cluster of the oxygen-evolving complex. It may also provide a ligand for a Cl- that is required for oxygen evolution. PSII binds additional chlorophylls, carotenoids and specific lipids..

It is found in the plastid. It localises to the chloroplast thylakoid membrane. One of the components of the core complex of photosystem II (PSII). It binds chlorophyll and helps catalyze the primary light-induced photochemical processes of PSII. PSII is a light-driven water:plastoquinone oxidoreductase, using light energy to abstract electrons from H(2)O, generating O(2) and a proton gradient subsequently used for ATP formation. This chain is Photosystem II CP43 reaction center protein, found in Cryptomeria japonica (Japanese cedar).